The primary structure comprises 205 residues: Holliday junction branch migration complex subunit RuvA (205 aa).

The tract at residues 1–68 (MIGYLEGTLL…QPKPVLIGFN (68 aa)) is domain I. The tract at residues 69–146 (TEEEKDFFHL…RFADAGHSSA (78 aa)) is domain II. A flexible linker region spans residues 147–151 (PDVPV). Residues 152–205 (TGSLADQTVEVLVGQLGYKPNEARLMVAGALKRNPDVSTPEALFDEIFKHGQAQ) are domain III.

Belongs to the RuvA family. Homotetramer. Forms an RuvA(8)-RuvB(12)-Holliday junction (HJ) complex. HJ DNA is sandwiched between 2 RuvA tetramers; dsDNA enters through RuvA and exits via RuvB. An RuvB hexamer assembles on each DNA strand where it exits the tetramer. Each RuvB hexamer is contacted by two RuvA subunits (via domain III) on 2 adjacent RuvB subunits; this complex drives branch migration. In the full resolvosome a probable DNA-RuvA(4)-RuvB(12)-RuvC(2) complex forms which resolves the HJ.

Its subcellular location is the cytoplasm. Functionally, the RuvA-RuvB-RuvC complex processes Holliday junction (HJ) DNA during genetic recombination and DNA repair, while the RuvA-RuvB complex plays an important role in the rescue of blocked DNA replication forks via replication fork reversal (RFR). RuvA specifically binds to HJ cruciform DNA, conferring on it an open structure. The RuvB hexamer acts as an ATP-dependent pump, pulling dsDNA into and through the RuvAB complex. HJ branch migration allows RuvC to scan DNA until it finds its consensus sequence, where it cleaves and resolves the cruciform DNA. In Desulfosudis oleivorans (strain DSM 6200 / JCM 39069 / Hxd3) (Desulfococcus oleovorans), this protein is Holliday junction branch migration complex subunit RuvA.